The primary structure comprises 285 residues: Ribose-phosphate pyrophosphokinase (285 aa).

ATP is bound by residues 34–36 and 91–92; these read DGE and RQ. 2 residues coordinate Mg(2+): H124 and D162. K185 is a catalytic residue. D-ribose 5-phosphate-binding positions include R187, D211, and 215–219; that span reads STGGT.

This sequence belongs to the ribose-phosphate pyrophosphokinase family. Class III (archaeal) subfamily. Mg(2+) is required as a cofactor.

The protein resides in the cytoplasm. It catalyses the reaction D-ribose 5-phosphate + ATP = 5-phospho-alpha-D-ribose 1-diphosphate + AMP + H(+). Its pathway is metabolic intermediate biosynthesis; 5-phospho-alpha-D-ribose 1-diphosphate biosynthesis; 5-phospho-alpha-D-ribose 1-diphosphate from D-ribose 5-phosphate (route I): step 1/1. Involved in the biosynthesis of the central metabolite phospho-alpha-D-ribosyl-1-pyrophosphate (PRPP) via the transfer of pyrophosphoryl group from ATP to 1-hydroxyl of ribose-5-phosphate (Rib-5-P). The polypeptide is Ribose-phosphate pyrophosphokinase (Pyrococcus abyssi (strain GE5 / Orsay)).